Consider the following 219-residue polypeptide: Phosphatidylserine decarboxylase proenzyme (219 aa).

The active-site Schiff-base intermediate with substrate; via pyruvic acid is the Ser182. Residue Ser182 is modified to Pyruvic acid (Ser); by autocatalysis.

This sequence belongs to the phosphatidylserine decarboxylase family. PSD-A subfamily. As to quaternary structure, heterodimer of a large membrane-associated beta subunit and a small pyruvoyl-containing alpha subunit. Pyruvate is required as a cofactor. Post-translationally, is synthesized initially as an inactive proenzyme. Formation of the active enzyme involves a self-maturation process in which the active site pyruvoyl group is generated from an internal serine residue via an autocatalytic post-translational modification. Two non-identical subunits are generated from the proenzyme in this reaction, and the pyruvate is formed at the N-terminus of the alpha chain, which is derived from the carboxyl end of the proenzyme. The post-translation cleavage follows an unusual pathway, termed non-hydrolytic serinolysis, in which the side chain hydroxyl group of the serine supplies its oxygen atom to form the C-terminus of the beta chain, while the remainder of the serine residue undergoes an oxidative deamination to produce ammonia and the pyruvoyl prosthetic group on the alpha chain.

Its subcellular location is the cell membrane. It carries out the reaction a 1,2-diacyl-sn-glycero-3-phospho-L-serine + H(+) = a 1,2-diacyl-sn-glycero-3-phosphoethanolamine + CO2. Its pathway is phospholipid metabolism; phosphatidylethanolamine biosynthesis; phosphatidylethanolamine from CDP-diacylglycerol: step 2/2. Its function is as follows. Catalyzes the formation of phosphatidylethanolamine (PtdEtn) from phosphatidylserine (PtdSer). This is Phosphatidylserine decarboxylase proenzyme from Chlorobium phaeovibrioides (strain DSM 265 / 1930) (Prosthecochloris vibrioformis (strain DSM 265)).